A 169-amino-acid polypeptide reads, in one-letter code: Inorganic pyrophosphatase (169 aa).

Residues K26, R40, and Y52 each coordinate substrate. 3 residues coordinate Mg(2+): D62, D67, and D99. Residue Y138 participates in substrate binding.

The protein belongs to the PPase family. Homohexamer. Mg(2+) is required as a cofactor.

Its subcellular location is the cytoplasm. The enzyme catalyses diphosphate + H2O = 2 phosphate + H(+). In terms of biological role, catalyzes the hydrolysis of inorganic pyrophosphate (PPi) forming two phosphate ions. The protein is Inorganic pyrophosphatase of Thermoplasma volcanium (strain ATCC 51530 / DSM 4299 / JCM 9571 / NBRC 15438 / GSS1).